The sequence spans 350 residues: Cilia- and flagella-associated protein 36 (350 aa).

Residues 142 to 167 (SELEQQEMKILQEVLRRSKEEYDLQM) are a coiled coil. Disordered regions lie at residues 171-233 (GLGS…ATTA) and 301-337 (RQTGKGLTDTAAAAAPEPKPATQEISVEEKKKLQKRK). Positions 177–220 (LASTSSSVSETPQNPEQRLSNGVSDPLTLTQPDSEMEESSTATQ) are enriched in polar residues. The stretch at 280 to 350 (VALQQRSEYL…EKLKEEVIKK (71 aa)) forms a coiled coil.

It belongs to the CFAP36 family.

The protein resides in the nucleus. The protein localises to the cytoplasm. It is found in the cell projection. Its subcellular location is the cilium. It localises to the flagellum. The chain is Cilia- and flagella-associated protein 36 from Danio rerio (Zebrafish).